Here is a 585-residue protein sequence, read N- to C-terminus: tRNA-guanine(15) transglycosylase (585 aa).

The Nucleophile role is filled by Asp95. Substrate contacts are provided by Asp130 and Ala196. Positions 279, 281, and 284 each coordinate Zn(2+). The PUA domain occupies 507-582 (VMRVVVNKEA…RAVKTRRGVE (76 aa)).

Belongs to the archaeosine tRNA-ribosyltransferase family. The cofactor is Zn(2+).

The catalysed reaction is guanosine(15) in tRNA + 7-cyano-7-deazaguanine = 7-cyano-7-carbaguanosine(15) in tRNA + guanine. It participates in tRNA modification; archaeosine-tRNA biosynthesis. Its function is as follows. Exchanges the guanine residue with 7-cyano-7-deazaguanine (preQ0) at position 15 in the dihydrouridine loop (D-loop) of archaeal tRNAs. The protein is tRNA-guanine(15) transglycosylase of Pyrococcus furiosus (strain ATCC 43587 / DSM 3638 / JCM 8422 / Vc1).